Here is a 728-residue protein sequence, read N- to C-terminus: Probable ubiquitin-conjugating enzyme protein 17 (728 aa).

Over residues 1 to 17 (MSSQASQRSSSTSAVAQ) the composition is skewed to low complexity. Disordered regions lie at residues 1–23 (MSSQASQRSSSTSAVAQKTRERR) and 123–155 (SSRSADEQKRRARRNSSASLSHKGTGYGTGSTR). In terms of domain architecture, UBC core spans 402–568 (DRTKRIAKEL…IEHATLNYAI (167 aa)). The active-site Glycyl thioester intermediate is the Cys495. 2 disordered regions span residues 649–678 (PFAKEEAEESERLKREQSEKEEKQKKEAAA) and 709–728 (RTQPTGDYSVPSVNEPSTSS). Basic and acidic residues predominate over residues 658 to 678 (SERLKREQSEKEEKQKKEAAA). Polar residues predominate over residues 710 to 728 (TQPTGDYSVPSVNEPSTSS).

Belongs to the ubiquitin-conjugating enzyme family.

The polypeptide is Probable ubiquitin-conjugating enzyme protein 17 (ubc-17) (Caenorhabditis elegans).